Here is a 197-residue protein sequence, read N- to C-terminus: 3-isopropylmalate dehydratase small subunit (197 aa).

It belongs to the LeuD family. LeuD type 1 subfamily. Heterodimer of LeuC and LeuD.

It carries out the reaction (2R,3S)-3-isopropylmalate = (2S)-2-isopropylmalate. Its pathway is amino-acid biosynthesis; L-leucine biosynthesis; L-leucine from 3-methyl-2-oxobutanoate: step 2/4. Its function is as follows. Catalyzes the isomerization between 2-isopropylmalate and 3-isopropylmalate, via the formation of 2-isopropylmaleate. The chain is 3-isopropylmalate dehydratase small subunit from Mycobacterium sp. (strain KMS).